Reading from the N-terminus, the 127-residue chain is Small ribosomal subunit protein eS8 (127 aa).

It belongs to the eukaryotic ribosomal protein eS8 family. In terms of assembly, part of the 30S ribosomal subunit.

The protein is Small ribosomal subunit protein eS8 of Pyrococcus furiosus (strain ATCC 43587 / DSM 3638 / JCM 8422 / Vc1).